A 296-amino-acid chain; its full sequence is MNLNKDIATPARTNAILKKHGFTLKKSLGQNFLIDLNILAKIVEASGFDEQDGIVEIGPGIGALTEQLAKKADKVVAFEIDGRLIPVLEDTLSAYPNVKIIHSDVLKADLPGVLDAEFSKGQAIHVVANLPYYVTTPILMKLLEDRLPFKSITVMIQAEVAERIAAKPGSKEYGALSIAAQYYAEAKPMVVVPASVFVPQPRVDSSVLKLTIREKPLVEVIDERWFFNVFHASFANRRKTILNNLVHNLAGKDAKAAIEQALSEAGIDPKRRGETLSPQEFARLSDALYSTLRKAD.

Positions 31, 33, 58, 79, 104, and 129 each coordinate S-adenosyl-L-methionine.

It belongs to the class I-like SAM-binding methyltransferase superfamily. rRNA adenine N(6)-methyltransferase family. RsmA subfamily.

Its subcellular location is the cytoplasm. It carries out the reaction adenosine(1518)/adenosine(1519) in 16S rRNA + 4 S-adenosyl-L-methionine = N(6)-dimethyladenosine(1518)/N(6)-dimethyladenosine(1519) in 16S rRNA + 4 S-adenosyl-L-homocysteine + 4 H(+). Specifically dimethylates two adjacent adenosines (A1518 and A1519) in the loop of a conserved hairpin near the 3'-end of 16S rRNA in the 30S particle. May play a critical role in biogenesis of 30S subunits. This chain is Ribosomal RNA small subunit methyltransferase A, found in Shouchella clausii (strain KSM-K16) (Alkalihalobacillus clausii).